The following is a 631-amino-acid chain: DNA mismatch repair protein MutL (631 aa).

The protein belongs to the DNA mismatch repair MutL/HexB family.

This protein is involved in the repair of mismatches in DNA. It is required for dam-dependent methyl-directed DNA mismatch repair. May act as a 'molecular matchmaker', a protein that promotes the formation of a stable complex between two or more DNA-binding proteins in an ATP-dependent manner without itself being part of a final effector complex. The polypeptide is DNA mismatch repair protein MutL (Lactobacillus acidophilus (strain ATCC 700396 / NCK56 / N2 / NCFM)).